The primary structure comprises 221 residues: UPF0758 protein NTHI1125 (221 aa).

The MPN domain occupies 98–221; sequence PIINDLETVK…CYSFAENCLL (124 aa). 3 residues coordinate Zn(2+): His170, His172, and Asp183. A JAMM motif motif is present at residues 170 to 183; it reads HNHPSGITEPSYSD.

The protein belongs to the UPF0758 family.

The polypeptide is UPF0758 protein NTHI1125 (Haemophilus influenzae (strain 86-028NP)).